We begin with the raw amino-acid sequence, 415 residues long: Probable carboxypeptidase ACLA_013260 (415 aa).

The N-terminal stretch at 1 to 17 is a signal peptide; it reads MKFPWLLLVKGAASVAA. N97 carries N-linked (GlcNAc...) asparagine glycosylation. Position 145 (D145) interacts with Zn(2+). The active-site Proton acceptor is E177. E178 is a binding site for Zn(2+). N-linked (GlcNAc...) asparagine glycosylation is present at N271.

This sequence belongs to the peptidase M20A family. It depends on Zn(2+) as a cofactor.

The protein localises to the secreted. The sequence is that of Probable carboxypeptidase ACLA_013260 from Aspergillus clavatus (strain ATCC 1007 / CBS 513.65 / DSM 816 / NCTC 3887 / NRRL 1 / QM 1276 / 107).